The following is an 85-amino-acid chain: Large ribosomal subunit protein bL27 (85 aa).

The interval 1–21 is disordered; sequence MAHKKGVGSSKNGRESESKRL.

This sequence belongs to the bacterial ribosomal protein bL27 family.

The sequence is that of Large ribosomal subunit protein bL27 from Porphyromonas gingivalis (strain ATCC 33277 / DSM 20709 / CIP 103683 / JCM 12257 / NCTC 11834 / 2561).